The sequence spans 427 residues: Putative zinc protease AlbF (427 aa).

His66 serves as a coordination point for Zn(2+). Catalysis depends on Glu69, which acts as the Proton acceptor. His70 and Glu142 together coordinate Zn(2+).

This sequence belongs to the peptidase M16 family. It depends on Zn(2+) as a cofactor.

In terms of biological role, required for production of the bacteriocin subtilosin. Could catalyze some step in the processing of presubtilosin. This chain is Putative zinc protease AlbF (albF), found in Bacillus subtilis.